The sequence spans 198 residues: UPF0215 protein NEQ431 (198 aa).

The interval 179 to 198 (TKGDSSKPRAGGDSNPGPAG) is disordered.

It belongs to the UPF0215 family.

In Nanoarchaeum equitans (strain Kin4-M), this protein is UPF0215 protein NEQ431.